We begin with the raw amino-acid sequence, 229 residues long: UPF0500 protein C1orf216 (229 aa).

The disordered stretch occupies residues 1-144 (MFAIQPGLAE…RGPGPPDPLL (144 aa)). Residues 62 to 71 (SESPSDNQAF) show a composition bias toward polar residues. 2 stretches are compositionally biased toward low complexity: residues 84 to 93 (PPEGAEIPGA) and 115 to 126 (SSSLSIDSRSSS).

Belongs to the UPF0500 family.

This chain is UPF0500 protein C1orf216 (C1orf216), found in Homo sapiens (Human).